The following is a 383-amino-acid chain: NADH-quinone oxidoreductase subunit D 1 (383 aa).

The protein belongs to the complex I 49 kDa subunit family. In terms of assembly, NDH-1 is composed of 14 different subunits. Subunits NuoB, C, D, E, F, and G constitute the peripheral sector of the complex.

The protein resides in the cell membrane. It carries out the reaction a quinone + NADH + 5 H(+)(in) = a quinol + NAD(+) + 4 H(+)(out). NDH-1 shuttles electrons from NADH, via FMN and iron-sulfur (Fe-S) centers, to quinones in the respiratory chain. The immediate electron acceptor for the enzyme in this species is believed to be a menaquinone. Couples the redox reaction to proton translocation (for every two electrons transferred, four hydrogen ions are translocated across the cytoplasmic membrane), and thus conserves the redox energy in a proton gradient. The sequence is that of NADH-quinone oxidoreductase subunit D 1 from Streptomyces coelicolor (strain ATCC BAA-471 / A3(2) / M145).